The chain runs to 292 residues: GTP cyclohydrolase FolE2 (292 aa).

This sequence belongs to the GTP cyclohydrolase IV family.

It carries out the reaction GTP + H2O = 7,8-dihydroneopterin 3'-triphosphate + formate + H(+). The protein operates within cofactor biosynthesis; 7,8-dihydroneopterin triphosphate biosynthesis; 7,8-dihydroneopterin triphosphate from GTP: step 1/1. Its function is as follows. Converts GTP to 7,8-dihydroneopterin triphosphate. This is GTP cyclohydrolase FolE2 from Staphylococcus haemolyticus (strain JCSC1435).